The chain runs to 94 residues: Integration host factor subunit beta (94 aa).

This sequence belongs to the bacterial histone-like protein family. In terms of assembly, heterodimer of an alpha and a beta chain.

This protein is one of the two subunits of integration host factor, a specific DNA-binding protein that functions in genetic recombination as well as in transcriptional and translational control. This Pectobacterium atrosepticum (strain SCRI 1043 / ATCC BAA-672) (Erwinia carotovora subsp. atroseptica) protein is Integration host factor subunit beta.